A 211-amino-acid polypeptide reads, in one-letter code: Cell division protein SepF (211 aa).

A compositionally biased stretch (acidic residues) spans 15–26; sequence DTDEVNEVEEEV. The disordered stretch occupies residues 15–111; the sequence is DTDEVNEVEE…ETYQAQTTVQ (97 aa). Polar residues-rich tracts occupy residues 44 to 57, 64 to 81, and 91 to 111; these read IPSQ…QNPA, ARSQ…PNRQ, and RESV…TTVQ.

It belongs to the SepF family. As to quaternary structure, homodimer. Interacts with FtsZ.

The protein resides in the cytoplasm. Cell division protein that is part of the divisome complex and is recruited early to the Z-ring. Probably stimulates Z-ring formation, perhaps through the cross-linking of FtsZ protofilaments. Its function overlaps with FtsA. In Streptococcus uberis (strain ATCC BAA-854 / 0140J), this protein is Cell division protein SepF.